The sequence spans 303 residues: N-acetyl-D-glucosamine kinase (303 aa).

ATP-binding positions include 4 to 11 (GFDIGGTK) and 133 to 140 (GVGGGLVL). Zn(2+) is bound by residues histidine 157, cysteine 177, cysteine 179, and cysteine 184.

The protein belongs to the ROK (NagC/XylR) family. NagK subfamily.

It carries out the reaction N-acetyl-D-glucosamine + ATP = N-acetyl-D-glucosamine 6-phosphate + ADP + H(+). It functions in the pathway cell wall biogenesis; peptidoglycan recycling. In terms of biological role, catalyzes the phosphorylation of N-acetyl-D-glucosamine (GlcNAc) derived from cell-wall degradation, yielding GlcNAc-6-P. In Salmonella paratyphi A (strain ATCC 9150 / SARB42), this protein is N-acetyl-D-glucosamine kinase.